Consider the following 796-residue polypeptide: Histone-lysine N-methyltransferase PRDM9 (796 aa).

Residues 1–23 are disordered; that stretch reads MSRTMNTNKPEENSTEGDAGKLE. Residues 27-90 form the KRAB-related domain; the sequence is KVKDEFKDIS…QRQAIKPQIN (64 aa). Positions 149 to 172 are disordered; that stretch reads SEHAQKPVCSPEEGNTSGQHFGKK. Zn(2+)-binding residues include Cys209, Cys212, Cys220, and His223. In terms of domain architecture, SET spans 248–362; sequence PGLRIGPSGI…PGRELLVWYG (115 aa). Residues 260-262, Tyr295, and 324-325 each bind S-adenosyl-L-methionine; these read AGL and NC. Substrate is bound at residue 292-298; it reads NSGYSWL. A substrate-binding site is contributed by Tyr361. Residue Lys372 is modified to N6,N6,N6-trimethyllysine; alternate. Lys372 is subject to N6-methyllysine; alternate. An N6-methyllysine mark is found at Lys376 and Lys378. The C2H2-type 1 zinc finger occupies 392–415; sequence HPCFLCSLAFSSQKFLTQHVEWNH. The Zn(2+) site is built by Cys394, Cys397, His410, and His415. The span at 443 to 457 shows a compositional bias: basic and acidic residues; it reads FDSQNKNDKASNEVK. The disordered stretch occupies residues 443–497; sequence FDSQNKNDKASNEVKRKSKPRHKWTRQRISTAFSSTLKEQMRSEESKRTVEEELR. The segment covering 458–468 has biased composition (basic residues); that stretch reads RKSKPRHKWTR. The span at 469–480 shows a compositional bias: polar residues; it reads QRISTAFSSTLK. The span at 481–497 shows a compositional bias: basic and acidic residues; the sequence is EQMRSEESKRTVEEELR. The C2H2-type 2; degenerate zinc finger occupies 522–540; it reads QCGQCFSDKSNVSEHQRTH. 9 C2H2-type zinc fingers span residues 546–568, 574–596, 602–624, 630–652, 658–680, 686–708, 714–736, 742–764, and 770–792; these read YICRECGRGFSQKSDLIKHQRTH, YICRECGRGFTQKSDLIKHQRTH, YICRECGRGFTQKSSLIRHQRTH, YICRECGLGFTQKSNLIRHLRTH, YICRECGLGFTRKSNLIQHQRTH, YICRECGQGLTWKSSLIQHQRTH, and YICRECGRGFTWKSSLIQHQRTH. Zn(2+) contacts are provided by Cys716, Cys719, His732, His736, Cys744, Cys747, His760, His764, Cys772, Cys775, His788, and His792.

It belongs to the class V-like SAM-binding methyltransferase superfamily. Homodimer. Interacts with EHMT2 and CDYL; interaction only takes place when PRDM9 is bound to hotspot DNA. Interacts with CXXC1; this interaction does not link PRDM9-activated recombination hotspot sites with DSB machinery and is not required for the hotspot recognition pathway. Forms a complex with EWSR1, REC8, SYCP3 and SYCP1; complex formation is dependent of phosphorylated form of REC8 and requires PRDM9 bound to hotspot DNA; EWSR1 joins PRDM9 with the chromosomal axis through REC8. Post-translationally, mono-methylated; automethylated. Tri-methylated; automethylated. Mono-methylation is predominant; automethylation is lower and slower than H3 peptide methylation and is in a highest S-adenosyl-L-methionine concentration-dependent. There are two major sites for automethylation at Lys-372 and Lys-378. Lysines can be simultaneously methylated, such as Lys-372(me3)/Lys-376(me1), Lys-372(me1)/Lys-378(me1) and Lys-372(me1)/Lys-376(me1)/Lys-378(me1). Automethylation is an intramolecular (cis) process.

The protein resides in the nucleus. The protein localises to the chromosome. It carries out the reaction L-lysyl-[protein] + S-adenosyl-L-methionine = N(6)-methyl-L-lysyl-[protein] + S-adenosyl-L-homocysteine + H(+). The enzyme catalyses N(6)-methyl-L-lysyl-[protein] + S-adenosyl-L-methionine = N(6),N(6)-dimethyl-L-lysyl-[protein] + S-adenosyl-L-homocysteine + H(+). The catalysed reaction is L-lysyl(4)-[histone H3] + 3 S-adenosyl-L-methionine = N(6),N(6),N(6)-trimethyl-L-lysyl(4)-[histone H3] + 3 S-adenosyl-L-homocysteine + 3 H(+). It catalyses the reaction L-lysyl(36)-[histone H3] + 3 S-adenosyl-L-methionine = N(6),N(6),N(6)-trimethyl-L-lysyl(36)-[histone H3] + 3 S-adenosyl-L-homocysteine + 3 H(+). It carries out the reaction L-lysyl(9)-[histone H3] + 3 S-adenosyl-L-methionine = N(6),N(6),N(6)-trimethyl-L-lysyl(9)-[histone H3] + 3 S-adenosyl-L-homocysteine + 3 H(+). The enzyme catalyses L-lysyl(20)-[histone H4] + S-adenosyl-L-methionine = N(6)-methyl-L-lysyl(20)-[histone H4] + S-adenosyl-L-homocysteine + H(+). The catalysed reaction is N(6)-methyl-L-lysyl(20)-[histone H4] + S-adenosyl-L-methionine = N(6),N(6)-dimethyl-L-lysyl(20)-[histone H4] + S-adenosyl-L-homocysteine + H(+). Its function is as follows. Histone methyltransferase that sequentially mono-, di-, and tri-methylates both 'Lys-4' (H3K4) and 'Lys-36' (H3K36) of histone H3 to produce respectively trimethylated 'Lys-4' (H3K4me3) and trimethylated 'Lys-36' (H3K36me3) histone H3 and plays a key role in meiotic prophase by determining hotspot localization thereby promoting meiotic recombination. Can also methylate all four core histones with H3 being the best substrate and the most highly modified. Is also able, on one hand, to mono and di-methylate H4K20 and on other hand to trimethylate H3K9 with the di-methylated H3K9 as the best substrate. During meiotic prophase, binds specific DNA sequences through its zinc finger domains thereby determining hotspot localization where it promotes local H3K4me3 and H3K36me3 enrichment on the same nucleosomes through its histone methyltransferase activity. Thereby promotes double-stranded breaks (DSB) formation, at this subset of PRDM9-binding sites, that initiates meiotic recombination for the proper meiotic progression. During meiotic progression hotspot-bound PRDM9 interacts with several complexes; in early leptonema binds CDYL and EHMT2 followed by EWSR1 and CXXC1 by the end of leptonema. EWSR1 joins PRDM9 with the chromosomal axis through REC8. In this way, controls the DSB repair pathway, pairing of homologous chromosomes and sex body formation. Moreover plays a central role in the transcriptional activation of genes during early meiotic prophase thanks to H3K4me3 and H3K36me3 enrichment that represents a specific tag for epigenetic transcriptional activation. In addition performs automethylation. Acetylation and phosphorylation of histone H3 attenuate or prevent histone H3 methylation. The chain is Histone-lysine N-methyltransferase PRDM9 from Rattus norvegicus (Rat).